Reading from the N-terminus, the 367-residue chain is Inositol-3-phosphate synthase (367 aa).

The NAD(+) site is built by Asp-78, Ala-137, Tyr-157, Ser-200, Asp-235, and Lys-248.

Belongs to the myo-inositol 1-phosphate synthase family. The cofactor is NAD(+).

The catalysed reaction is D-glucose 6-phosphate = 1D-myo-inositol 3-phosphate. Functionally, key enzyme in myo-inositol biosynthesis pathway that catalyzes the conversion of glucose 6-phosphate to 1D-myo-inositol 3-phosphate in a NAD-dependent manner. The protein is Inositol-3-phosphate synthase (ino1) of Mycobacterium tuberculosis (strain CDC 1551 / Oshkosh).